Reading from the N-terminus, the 25-residue chain is Omega conotoxin-CVIF (25 aa).

Intrachain disulfides connect Cys1-Cys16, Cys8-Cys20, and Cys15-Cys25. Cys25 is modified (cysteine amide).

The protein belongs to the conotoxin O1 superfamily. Expressed by the venom duct.

The protein resides in the secreted. Functionally, omega-conotoxins act at presynaptic membranes, they bind and block voltage-gated calcium channels. This toxin blocks N-type calcium channels (Cav2.2/CACNA1B). It shows a higher potency when Cav2.2/CACNA1B is only expressed with the ancillary subunit CACNB3 (IC(50)=0.1 nM) than on Cav2.2/CACNA1B expressed with the ancillary subunits CACNA2D1 and CACNB3 (IC(50)=19.9 nM). The Cav2.2/CACNA1B block by this toxin is voltage-independent, whereas the recovery from toxin block is voltage-dependent. There is a low recovery at physiological membrane potential and a high recovery with hyperpolarized potential. This indicates that the toxin has a higher affinity for Cav2.2/CACNA1B in the inactivated state. It is noteworthy that ancillary subunits beta modulate recovery from this toxin block. Cav2.2/CACNA1B expressed with the ancillary subunit CACNB2a (isoform 2a) almost recover completely from this toxin block, whereas an expression with CACNB3 exhibits relatively weak recovery. Inhibition by this toxin of excitatory synaptic transmission is reversible. In vivo, when tested on rat model of persistent pain, this toxin blocks chronic pain behavior. The polypeptide is Omega conotoxin-CVIF (Conus catus (Cat cone)).